The following is a 217-amino-acid chain: 3,4-dihydroxy-2-butanone 4-phosphate synthase (217 aa).

D-ribulose 5-phosphate-binding positions include 37-38, D42, 150-154, and E174; these read RE and RRGHT. Mg(2+) is bound at residue E38. Mg(2+) is bound at residue H153.

This sequence belongs to the DHBP synthase family. As to quaternary structure, homodimer. Mg(2+) is required as a cofactor. Mn(2+) serves as cofactor.

It catalyses the reaction D-ribulose 5-phosphate = (2S)-2-hydroxy-3-oxobutyl phosphate + formate + H(+). Its pathway is cofactor biosynthesis; riboflavin biosynthesis; 2-hydroxy-3-oxobutyl phosphate from D-ribulose 5-phosphate: step 1/1. Its function is as follows. Catalyzes the conversion of D-ribulose 5-phosphate to formate and 3,4-dihydroxy-2-butanone 4-phosphate. This Serratia proteamaculans (strain 568) protein is 3,4-dihydroxy-2-butanone 4-phosphate synthase.